Consider the following 520-residue polypeptide: 2-methylcitrate dehydratase, mitochondrial (520 aa).

Residues 1–37 (MRAFRSAANFGAASNIYRKSFTPASIASNRFVSARMS) constitute a mitochondrion transit peptide.

Belongs to the PrpD family. Monomer.

It is found in the mitochondrion. It carries out the reaction (2S,3S)-2-methylcitrate = 2-methyl-cis-aconitate + H2O. It functions in the pathway organic acid metabolism; propanoate degradation. With respect to regulation, several bivalent metal ions, such as nickel, copper, zinc, mercury, and lead, inhibit the activity to some extent. Inhibited by structural analogs such as citrate, cis-aconitate, isocitrate, 2-methylisocitrate, tricarballylate and fluorocitrate, but not by trans-aconitate or adipate. Its function is as follows. Component of the methylcitrate cycle that catalyzes the dehydration of 2-methylcitrate to 2-methyl-cis-aconitate. The methylcitrate cycle is a metabolic pathway for the consumption of propionic acid. This Yarrowia lipolytica (strain CLIB 122 / E 150) (Yeast) protein is 2-methylcitrate dehydratase, mitochondrial.